Here is a 242-residue protein sequence, read N- to C-terminus: tRNA1(Val) (adenine(37)-N6)-methyltransferase (242 aa).

The protein belongs to the methyltransferase superfamily. tRNA (adenine-N(6)-)-methyltransferase family.

It localises to the cytoplasm. It carries out the reaction adenosine(37) in tRNA1(Val) + S-adenosyl-L-methionine = N(6)-methyladenosine(37) in tRNA1(Val) + S-adenosyl-L-homocysteine + H(+). In terms of biological role, specifically methylates the adenine in position 37 of tRNA(1)(Val) (anticodon cmo5UAC). The polypeptide is tRNA1(Val) (adenine(37)-N6)-methyltransferase (Mannheimia succiniciproducens (strain KCTC 0769BP / MBEL55E)).